The chain runs to 395 residues: Probable L-tyrosine/L-aspartate decarboxylase (395 aa).

Lysine 242 is subject to N6-(pyridoxal phosphate)lysine.

It belongs to the group II decarboxylase family. MfnA subfamily. Pyridoxal 5'-phosphate serves as cofactor.

The catalysed reaction is L-tyrosine + H(+) = tyramine + CO2. It catalyses the reaction L-aspartate + H(+) = beta-alanine + CO2. Its pathway is cofactor biosynthesis; methanofuran biosynthesis. The protein operates within cofactor biosynthesis; coenzyme A biosynthesis. Catalyzes the decarboxylation of L-tyrosine to produce tyramine for methanofuran biosynthesis. Can also catalyze the decarboxylation of L-aspartate to produce beta-alanine for coenzyme A (CoA) biosynthesis. The chain is Probable L-tyrosine/L-aspartate decarboxylase from Methanosarcina barkeri (strain Fusaro / DSM 804).